The chain runs to 340 residues: UDP-3-O-acylglucosamine N-acyltransferase (340 aa).

Histidine 238 serves as the catalytic Proton acceptor.

It belongs to the transferase hexapeptide repeat family. LpxD subfamily. Homotrimer.

The enzyme catalyses a UDP-3-O-[(3R)-3-hydroxyacyl]-alpha-D-glucosamine + a (3R)-hydroxyacyl-[ACP] = a UDP-2-N,3-O-bis[(3R)-3-hydroxyacyl]-alpha-D-glucosamine + holo-[ACP] + H(+). Its pathway is bacterial outer membrane biogenesis; LPS lipid A biosynthesis. Its function is as follows. Catalyzes the N-acylation of UDP-3-O-acylglucosamine using 3-hydroxyacyl-ACP as the acyl donor. Is involved in the biosynthesis of lipid A, a phosphorylated glycolipid that anchors the lipopolysaccharide to the outer membrane of the cell. The chain is UDP-3-O-acylglucosamine N-acyltransferase from Shewanella denitrificans (strain OS217 / ATCC BAA-1090 / DSM 15013).